A 363-amino-acid chain; its full sequence is MTSVINVNLPTQSYEIAIAPASLDQIGQSLAGLKLGKKVLLVSNPTIFKHFGKVAVDSLEAAGFQVASYSLPAGERYKTLNSIQKLYDIALENRLERSSTMVALGGGVIGDMTGFAAATWLRGINVVQVPTTLLAMVDSAIGGKTGVNHPHGKNLIGAFHQPRFVLIDPQVLKTLPVREFRAGMAEVIKYGVIWDAELFNQLEQSKRLDQLRYIKPELVDAILTRSCQAKADVVGKDEKEGGLRAILNYGHTVGHAVESLTNYRLLKHGEAVGIGMVAAGQIAVNLELWQQADADRQNALIEKAGLPTKLPVGLDIEGIIEALQLDKKVKDGKVRFVLPTQIGVVTVTDEVTSDHIRQVLQQM.

NAD(+) is bound by residues 107 to 111 (GVIGD), 131 to 132 (TT), Lys-144, and Lys-153. Zn(2+) contacts are provided by Glu-186, His-251, and His-268.

This sequence belongs to the sugar phosphate cyclases superfamily. Dehydroquinate synthase family. NAD(+) serves as cofactor. Co(2+) is required as a cofactor. It depends on Zn(2+) as a cofactor.

It is found in the cytoplasm. The enzyme catalyses 7-phospho-2-dehydro-3-deoxy-D-arabino-heptonate = 3-dehydroquinate + phosphate. It participates in metabolic intermediate biosynthesis; chorismate biosynthesis; chorismate from D-erythrose 4-phosphate and phosphoenolpyruvate: step 2/7. Its function is as follows. Catalyzes the conversion of 3-deoxy-D-arabino-heptulosonate 7-phosphate (DAHP) to dehydroquinate (DHQ). This Nostoc sp. (strain PCC 7120 / SAG 25.82 / UTEX 2576) protein is 3-dehydroquinate synthase.